The sequence spans 417 residues: Serine hydroxymethyltransferase (417 aa).

(6S)-5,6,7,8-tetrahydrofolate contacts are provided by residues leucine 121 and 125-127 (GHL). At lysine 229 the chain carries N6-(pyridoxal phosphate)lysine. (6S)-5,6,7,8-tetrahydrofolate is bound at residue 355–357 (SPF).

It belongs to the SHMT family. As to quaternary structure, homodimer. Pyridoxal 5'-phosphate serves as cofactor.

The protein localises to the cytoplasm. The catalysed reaction is (6R)-5,10-methylene-5,6,7,8-tetrahydrofolate + glycine + H2O = (6S)-5,6,7,8-tetrahydrofolate + L-serine. Its pathway is one-carbon metabolism; tetrahydrofolate interconversion. It participates in amino-acid biosynthesis; glycine biosynthesis; glycine from L-serine: step 1/1. Catalyzes the reversible interconversion of serine and glycine with tetrahydrofolate (THF) serving as the one-carbon carrier. This reaction serves as the major source of one-carbon groups required for the biosynthesis of purines, thymidylate, methionine, and other important biomolecules. Also exhibits THF-independent aldolase activity toward beta-hydroxyamino acids, producing glycine and aldehydes, via a retro-aldol mechanism. This Shewanella putrefaciens (strain CN-32 / ATCC BAA-453) protein is Serine hydroxymethyltransferase.